Reading from the N-terminus, the 146-residue chain is D-aminoacyl-tRNA deacylase (146 aa).

Positions 138–139 (GP) match the Gly-cisPro motif, important for rejection of L-amino acids motif.

The protein belongs to the DTD family. In terms of assembly, homodimer.

It localises to the cytoplasm. It catalyses the reaction glycyl-tRNA(Ala) + H2O = tRNA(Ala) + glycine + H(+). It carries out the reaction a D-aminoacyl-tRNA + H2O = a tRNA + a D-alpha-amino acid + H(+). In terms of biological role, an aminoacyl-tRNA editing enzyme that deacylates mischarged D-aminoacyl-tRNAs. Also deacylates mischarged glycyl-tRNA(Ala), protecting cells against glycine mischarging by AlaRS. Acts via tRNA-based rather than protein-based catalysis; rejects L-amino acids rather than detecting D-amino acids in the active site. By recycling D-aminoacyl-tRNA to D-amino acids and free tRNA molecules, this enzyme counteracts the toxicity associated with the formation of D-aminoacyl-tRNA entities in vivo and helps enforce protein L-homochirality. The polypeptide is D-aminoacyl-tRNA deacylase (Stenotrophomonas maltophilia (strain R551-3)).